A 599-amino-acid polypeptide reads, in one-letter code: MCGIIGYIGNEKASKILLKGLKRLEYRGYDSCGIATIDDTIKLKKNTGKVLEVSKKENFEDMTGFIGIGHSRWATHGGITKNNAHPHYDCSEKICIAHNGIISNYKELKELLISKGHIFKSETDTEVIPHLIEEEIKDFKEITEKTYINAIQNTIKKLNGTYALLILNQDFPEMLVGVRNESPLILGIKKDECFIGSDISAFLEYTKLAMPLNDRDIVILRKENDEIDIEVLNYGKQVQRDTIELQWDMESAEKEGYEHFMLKEIMEEPVILKNSMKISKLEIENLGKEIEKCDKIYITAMGTSLHAAMVAEYWFSGLNKLVIPIDSSEFLTKGIVDEKTLVIAITQSGETYDTMKAVKYAKEKGAKTATIVNVLGSTATREADITIMMGSGLEIAVCATKTFMSQLVILYRLFIEYGKIIGKNMDIFEKELLNIPNYISKVLDEKENISKIAEELTAKNYLFISKGINLANALEGALKFKEITYLHAEGMSSGFLKHGTISLIDENMDTVALIPPSKSELLNSVLSNVEEIKARNGKIIGISPVEDNLKYSIKVPDVIEEVSPFVYATACQLLAYYKAVDLKRDVDKPRGLAKSVTVE.

Cys2 functions as the Nucleophile; for GATase activity in the catalytic mechanism. The region spanning 2-223 (CGIIGYIGNE…DRDIVILRKE (222 aa)) is the Glutamine amidotransferase type-2 domain. SIS domains follow at residues 286 to 423 (LGKE…IIGK) and 452 to 589 (IAEE…VDKP). Lys594 functions as the For Fru-6P isomerization activity in the catalytic mechanism.

As to quaternary structure, homodimer.

The protein localises to the cytoplasm. It catalyses the reaction D-fructose 6-phosphate + L-glutamine = D-glucosamine 6-phosphate + L-glutamate. Catalyzes the first step in hexosamine metabolism, converting fructose-6P into glucosamine-6P using glutamine as a nitrogen source. The polypeptide is Glutamine--fructose-6-phosphate aminotransferase [isomerizing] (glmS) (Methanococcus maripaludis (strain DSM 14266 / JCM 13030 / NBRC 101832 / S2 / LL)).